A 473-amino-acid chain; its full sequence is Ion-translocating oxidoreductase complex subunit C (473 aa).

2 4Fe-4S ferredoxin-type domains span residues 328–357 (KNESISEKTCIRCGYCSYVCPVNLLPQQLY) and 368–396 (TKKHYVLDCIECKACEKVCPSYIPLVKYF). Positions 337, 340, 343, 347, 376, 379, 382, and 386 each coordinate [4Fe-4S] cluster.

This sequence belongs to the 4Fe4S bacterial-type ferredoxin family. RnfC subfamily. In terms of assembly, the complex is composed of six subunits: RnfA, RnfB, RnfC, RnfD, RnfE and RnfG. The cofactor is [4Fe-4S] cluster.

The protein resides in the cell inner membrane. Its function is as follows. Part of a membrane-bound complex that couples electron transfer with translocation of ions across the membrane. The chain is Ion-translocating oxidoreductase complex subunit C from Buchnera aphidicola subsp. Acyrthosiphon pisum (strain APS) (Acyrthosiphon pisum symbiotic bacterium).